The chain runs to 244 residues: MKIFKPALWKIPPIENGSETALAEKTETLKQRLHRIAGSHRDARFASSLAAEDMVITDLIAGENLNIGIFTLDTGLLHAETLNLLDRIERVYPHMQIKRFQPIREDALHYVESKGRFAFYDSVEARRECCRIRKTEPLDRAIAGADAWLTGQRREQSATRTELPFAEYDAGRGIDKYNPIFDWSEHDVWAYILANNVPYNDLYRQGFPSIGCDPCTRPVKAGEDIRAGRWWWEDKNSKECGLHK.

Positions 129, 130, 212, and 215 each coordinate [4Fe-4S] cluster. The active-site Nucleophile; cysteine thiosulfonate intermediate is Cys240.

Belongs to the PAPS reductase family. CysH subfamily. [4Fe-4S] cluster serves as cofactor.

It is found in the cytoplasm. It carries out the reaction [thioredoxin]-disulfide + sulfite + AMP + 2 H(+) = adenosine 5'-phosphosulfate + [thioredoxin]-dithiol. It participates in sulfur metabolism; hydrogen sulfide biosynthesis; sulfite from sulfate. Functionally, catalyzes the formation of sulfite from adenosine 5'-phosphosulfate (APS) using thioredoxin as an electron donor. The protein is Adenosine 5'-phosphosulfate reductase of Neisseria meningitidis serogroup A / serotype 4A (strain DSM 15465 / Z2491).